A 323-amino-acid polypeptide reads, in one-letter code: MNLEKINELTAQDMAGVNAAILEQLNSDVQLINQLGYYIVSGGGKRIRPMIAVLAARAVGYEGNAHVTIAALIEFIHTATLLHDDVVDESDMRRGKATANAAFGNAASVLVGDFIYTRAFQMMTSLGSLKVLEVMSEAVNVIAEGEVLQLMNVNDPDITEENYMRVIYSKTARLFEAAAQCSGILAGCTPEEEKGLQDYGRYLGTAFQLIDDLLDYNADGEQLGKNVGDDLNEGKPTLPLLHAMHHGTPEQAQMIRTAIEQGNGRHLLEPVLEAMNACGSLEWTRQRAEEEADKAIAALQVLPDTPWREALIGLAHIAVQRDR.

The isopentenyl diphosphate site is built by lysine 45, arginine 48, and histidine 77. 2 residues coordinate Mg(2+): aspartate 84 and aspartate 88. Arginine 93 contacts an all-trans-polyprenyl diphosphate. Arginine 94 is a binding site for isopentenyl diphosphate. The an all-trans-polyprenyl diphosphate site is built by lysine 170, threonine 171, and glutamine 208.

Belongs to the FPP/GGPP synthase family. Requires Mg(2+) as cofactor.

The catalysed reaction is 5 isopentenyl diphosphate + (2E,6E)-farnesyl diphosphate = all-trans-octaprenyl diphosphate + 5 diphosphate. Its function is as follows. Supplies octaprenyl diphosphate, the precursor for the side chain of the isoprenoid quinones ubiquinone and menaquinone. The polypeptide is Octaprenyl diphosphate synthase (ispB) (Escherichia coli (strain K12)).